The sequence spans 132 residues: Flagellar basal body rod protein FlgB (132 aa).

This sequence belongs to the flagella basal body rod proteins family. In terms of assembly, the basal body constitutes a major portion of the flagellar organelle and consists of a number of rings mounted on a central rod. In Gram-negative bacteria, at least four rings, L, P, S and M are present, whereas Gram-positive bacteria lack the L and P rings. The rod consists of about 26 subunits of FlgG in the distal portion, and FlgB, FlgC and FlgF build up the proximal portion of the rod with about 6 subunits each. Rod assembly occurs by export via the flagellum-specific pathway of its constituent proteins and by their incorporation into the rod structure in the probable order of FlgB, FlgC, FlgF and FlgG. Another protein, FliE, also assembles onto the stable rod structure.

The protein localises to the bacterial flagellum basal body. Functionally, structural component of flagellum, the bacterial motility apparatus. Part of the rod structure of flagellar basal body. The polypeptide is Flagellar basal body rod protein FlgB (Aeromonas hydrophila).